The primary structure comprises 877 residues: Neurotrypsin (877 aa).

An N-terminal signal peptide occupies residues 1–20 (MTLARFVLALVLGALPEVVS). The N-linked (GlcNAc...) asparagine glycan is linked to asparagine 26. The segment at 31-90 (HRHRHRHSPPPGLQYPYYLPTQQRPPRTRPPPPLPRFPRPPRALPAQRPHALQAGHTPRP) is disordered. The segment covering 44–55 (QYPYYLPTQQRP) has biased composition (low complexity). The segment covering 58–73 (TRPPPPLPRFPRPPRA) has biased composition (pro residues). The 73-residue stretch at 95–167 (CPAGEPWVSV…GKVDWGYCDC (73 aa)) folds into the Kringle domain. Cystine bridges form between cysteine 95-cysteine 167, cysteine 111-cysteine 151, cysteine 140-cysteine 165, cysteine 197-cysteine 261, cysteine 210-cysteine 271, cysteine 241-cysteine 251, cysteine 307-cysteine 371, cysteine 320-cysteine 381, cysteine 351-cysteine 361, cysteine 414-cysteine 477, cysteine 427-cysteine 487, cysteine 457-cysteine 467, cysteine 527-cysteine 591, cysteine 540-cysteine 601, cysteine 571-cysteine 581, cysteine 621-cysteine 752, cysteine 663-cysteine 679, cysteine 767-cysteine 833, cysteine 796-cysteine 810, and cysteine 823-cysteine 852. 4 consecutive SRCR domains span residues 172–273 (VRLR…TCSF), 282–383 (IRLV…SCTP), 389–489 (IRLA…ACYP), and 502–603 (VRLM…ICDY). Positions 621-632 (CGLRLLHRRQKR) are zymogen activation region. The 244-residue stretch at 633-876 (IIGGKNSLRG…FVPWIKSVTK (244 aa)) folds into the Peptidase S1 domain. Histidine 678 (charge relay system) is an active-site residue. Asparagine 685 carries N-linked (GlcNAc...) asparagine glycosylation. The active-site Charge relay system is aspartate 728. Serine 827 serves as the catalytic Charge relay system.

Belongs to the peptidase S1 family.

Its subcellular location is the secreted. In terms of biological role, plays a role in neuronal plasticity and the proteolytic action may subserve structural reorganizations associated with learning and memory operations. This is Neurotrypsin (PRSS12) from Pongo pygmaeus (Bornean orangutan).